A 372-amino-acid polypeptide reads, in one-letter code: ATP-sensitive inward rectifier potassium channel 1 (372 aa).

Topologically, residues 1-58 (MFKHLRRWFVTHIFGRSRQRARLVSKDGRCNIEFGNVDAQSRFIFFVDIWTTVLDLKW) are cytoplasmic. Phosphoserine; by SGK1 is present on S25. A helical transmembrane segment spans residues 59–83 (RYKMTVFITAFLGSWFLFGLLWYVV). Topologically, residues 84–108 (AYVHKDLPEFYPPDNRTPCVENING) are extracellular. The N-linked (GlcNAc...) asparagine glycan is linked to N98. The segment at residues 109–120 (MTSAFLFSLETQ) is an intramembrane region (helical; Pore-forming). An intramembrane region (pore-forming) is located at residues 121–127 (VTIGYGF). Residues 122-127 (TIGYGF) carry the Selectivity filter motif. The Extracellular portion of the chain corresponds to 128 to 136 (RFVTEQCAT). The helical transmembrane segment at 137–158 (AIFLLIFQSILGVIINSFMCGA) threads the bilayer. The Cytoplasmic portion of the chain corresponds to 159–372 (ILAKISRPKK…EVDETDDTQM (214 aa)). Positions 161-188 (AKISRPKKRAKTITFSKNAVISKRGGKL) are polyphosphoinositide (PIP2)-binding. 204–211 (GSHIYGKL) contacts ATP.

Belongs to the inward rectifier-type potassium channel (TC 1.A.2.1) family. KCNJ1 subfamily. In terms of assembly, interacts with SGK1 and SLC9A3R2/NHERF2. In terms of processing, phosphorylation at Ser-25 by SGK1 is necessary for its expression at the cell membrane.

The protein localises to the cell membrane. The enzyme catalyses K(+)(in) = K(+)(out). Inhibited by WNK3. Activated by phosphatidylinositol 4,5 biphosphate (PtdIns(4,5)P2). Inward rectifier potassium channels are characterized by a greater tendency to allow potassium to flow into the cell rather than out of it. Their voltage dependence is regulated by the concentration of extracellular potassium; as external potassium is raised, the voltage range of the channel opening shifts to more positive voltages. The inward rectification is mainly due to the blockage of outward current by internal magnesium. This channel is activated by internal ATP and can be blocked by external barium. In the kidney, probably plays a major role in potassium homeostasis. The polypeptide is ATP-sensitive inward rectifier potassium channel 1 (Kcnj1) (Mus musculus (Mouse)).